Consider the following 113-residue polypeptide: Cell division topological specificity factor (113 aa).

This sequence belongs to the MinE family.

Functionally, prevents the cell division inhibition by proteins MinC and MinD at internal division sites while permitting inhibition at polar sites. This ensures cell division at the proper site by restricting the formation of a division septum at the midpoint of the long axis of the cell. In Methylobacterium radiotolerans (strain ATCC 27329 / DSM 1819 / JCM 2831 / NBRC 15690 / NCIMB 10815 / 0-1), this protein is Cell division topological specificity factor.